The chain runs to 764 residues: MVTTHNLGFPRIGAKRELKFGLERYWKGESSRGALKALGAELRQRHWNDQRDLDLAPVGDFAFYDQVLDMSFTLGNLPKRVQGFHGDALDNYFRVARGRSAQSAEEHAACCGGVSAGEMTKWFDTNYHYIVPEFHADTNFSLDPSRLLQQLAEAQAQGVAAKPVIVGPVTYLWLGKAKDDSDRLALLPKLLPVYGALLDTLTAQGVEWVQIDEPILVTELDAAWQQAFRTAYAALETRRIKVLLATYFGQLQGNLALATSLPVDGLHVDAINARDEVDALARELPAERVLSVGAINGRNIWKTDLNATLDWLEPLAKRLGDRLWLAPSCSLLHVPVDLASEEKLDAEIRSWLAFALQKLDELKVLATALNEGRDKVADALAANAAAIHSRRHSPRVNNPAVKAAIARIDAQLGNRVSPYTQRAPKQSARLNLPAFPTTTIGSFPQTGEIRQARSQFKAGTLDEAGYRKAMQAEIERSVREQESLELDVLVHGEAERNDMVEYFGEQLDGYAFSQFGWVQSYGSRCVKPPILFGDISRPKAMTVEWITYAQSLTNKPMKGMLTGPVTILNWSFVRDDQPRSVSCYQLALAIREEVLDLEKAGVRVIQIDEAALREGLPLRRAQWGEYLKWAVESFRITANGVQDDTQIHTHMCYSEFNDIIASIADMDADVITIETSRSDMELLDAFDNFKYPNEIGPGVYDIHSPNIPTQEHIVGLMKKAAERIPAERLWVNPDCGLKTRQWAEVIPALTNMVAAAKTLRNQVQ.

Residues 16–19 (RELK) and lysine 121 each bind 5-methyltetrahydropteroyltri-L-glutamate. L-homocysteine-binding positions include 440 to 442 (IGS) and glutamate 493. Residues 440-442 (IGS) and glutamate 493 contribute to the L-methionine site. 5-methyltetrahydropteroyltri-L-glutamate-binding positions include 524–525 (RC) and tryptophan 570. Aspartate 608 contributes to the L-homocysteine binding site. Aspartate 608 is an L-methionine binding site. Glutamate 614 serves as a coordination point for 5-methyltetrahydropteroyltri-L-glutamate. The Zn(2+) site is built by histidine 650, cysteine 652, and glutamate 674. The active-site Proton donor is histidine 703. Cysteine 735 is a Zn(2+) binding site.

It belongs to the vitamin-B12 independent methionine synthase family. Requires Zn(2+) as cofactor.

It catalyses the reaction 5-methyltetrahydropteroyltri-L-glutamate + L-homocysteine = tetrahydropteroyltri-L-glutamate + L-methionine. It functions in the pathway amino-acid biosynthesis; L-methionine biosynthesis via de novo pathway; L-methionine from L-homocysteine (MetE route): step 1/1. Catalyzes the transfer of a methyl group from 5-methyltetrahydrofolate to homocysteine resulting in methionine formation. This is 5-methyltetrahydropteroyltriglutamate--homocysteine methyltransferase from Burkholderia lata (strain ATCC 17760 / DSM 23089 / LMG 22485 / NCIMB 9086 / R18194 / 383).